The following is a 255-amino-acid chain: 28.1 kDa virulence protein (255 aa).

Belongs to the SpvA family.

Not known. This protein is involved in the virulence of salmonellas. This chain is 28.1 kDa virulence protein (mkaB), found in Salmonella typhimurium.